We begin with the raw amino-acid sequence, 499 residues long: Probable malate:quinone oxidoreductase 4 (499 aa).

Belongs to the MQO family. Requires FAD as cofactor.

It catalyses the reaction (S)-malate + a quinone = a quinol + oxaloacetate. Its pathway is carbohydrate metabolism; tricarboxylic acid cycle; oxaloacetate from (S)-malate (quinone route): step 1/1. The sequence is that of Probable malate:quinone oxidoreductase 4 from Staphylococcus epidermidis (strain ATCC 35984 / DSM 28319 / BCRC 17069 / CCUG 31568 / BM 3577 / RP62A).